The sequence spans 350 residues: Protein RecA (350 aa).

66-73 (GPESSGKT) contacts ATP.

Belongs to the RecA family.

Its subcellular location is the cytoplasm. Can catalyze the hydrolysis of ATP in the presence of single-stranded DNA, the ATP-dependent uptake of single-stranded DNA by duplex DNA, and the ATP-dependent hybridization of homologous single-stranded DNAs. It interacts with LexA causing its activation and leading to its autocatalytic cleavage. This Dichelobacter nodosus (strain VCS1703A) protein is Protein RecA.